The following is a 263-amino-acid chain: Versicolorin reductase 1 (263 aa).

Residues Ile-22, Asp-68, Asn-95, and Arg-128 each coordinate NADP(+). Catalysis depends on proton donor residues Ser-144 and Ser-145. Residues Tyr-159, Lys-163, Ile-192, and Thr-194 each contribute to the NADP(+) site. The active-site Proton acceptor is Tyr-159. Lys-163 serves as the catalytic Lowers pKa of active site Tyr.

The protein belongs to the short-chain dehydrogenases/reductases (SDR) family.

Its subcellular location is the cytoplasm. The protein localises to the cytosol. The protein operates within mycotoxin biosynthesis. Functionally, versicolorin reductase; part of the fragmented gene cluster that mediates the biosynthesis of dothistromin (DOTH), a polyketide toxin very similar in structure to the aflatoxin precursor, versicolorin B. The first step of the pathway is the conversion of acetate to norsolorinic acid (NOR) and requires the fatty acid synthase subunits hexA and hexB, as well as the polyketide synthase pksA. PksA combines a hexanoyl starter unit and 7 malonyl-CoA extender units to synthesize the precursor NOR. The hexanoyl starter unit is provided to the acyl-carrier protein (ACP) domain by the fungal fatty acid synthase hexA/hexB. The second step is the conversion of NOR to averantin (AVN) and requires the norsolorinic acid ketoreductase nor1, which catalyzes the dehydration of norsolorinic acid to form (1'S)-averantin. The cytochrome P450 monooxygenase avnA then catalyzes the hydroxylation of AVN to 5'hydroxyaverantin (HAVN). The next step is performed by adhA that transforms HAVN to averufin (AVF). Averufin might then be converted to hydroxyversicolorone by cypX and avfA. Hydroxyversicolorone is further converted versiconal hemiacetal acetate (VHA) by moxY. VHA is then the substrate for the versiconal hemiacetal acetate esterase est1 to yield versiconal (VAL). Versicolorin B synthase vbsA then converts VAL to versicolorin B (VERB) by closing the bisfuran ring. Then, the activity of the versicolorin B desaturase verB leads to versicolorin A (VERA). DotB, a predicted chloroperoxidase, may perform epoxidation of the A-ring of VERA. Alternatively, a cytochrome P450, such as cypX or avnA could catalyze this step. It is also possible that another, uncharacterized, cytochrome P450 enzyme is responsible for this step. Opening of the epoxide could potentially be achieved by the epoxide hydrolase epoA. However, epoA seems not to be required for DOTH biosynthesis, but other epoxide hydrolases may have the ability to complement this hydrolysis. Alternatively, opening of the epoxide ring could be achieved non-enzymatically. The next step is the deoxygenation of ring A to yield the 5,8-dihydroxyanthraquinone which is most likely catalyzed by the NADPH dehydrogenase encoded by ver1. The last stages of DOTH biosynthesis are proposed to involve hydroxylation of the bisfuran. OrdB and norB might have oxidative roles here. An alternative possibility is that cytochrome P450 monoogenases such as avnA and cypX might perform these steps in addition to previously proposed steps. The polypeptide is Versicolorin reductase 1 (Dothistroma septosporum (Red band needle blight fungus)).